The sequence spans 150 residues: Troponin C, isoform 2B (150 aa).

Residue Met1 is modified to N-acetylmethionine. EF-hand domains are found at residues 7–42, 43–78, 83–118, and 119–150; these read EQLS…MGVK, ISEK…FLIE, ALKA…LDNR, and LTEE…MMNG. Positions 56, 58, 60, 62, and 67 each coordinate Ca(2+). Asp132, Asp134, Ser136, Thr138, and Glu143 together coordinate Ca(2+).

Belongs to the troponin C family.

Functionally, troponin is the central regulatory protein of striated muscle contraction. Tn consists of three components: Tn-I which is the inhibitor of actomyosin ATPase, Tn-T which contains the binding site for tropomyosin and Tn-C. The binding of calcium to Tn-C abolishes the inhibitory action of Tn on actin filaments. This Homarus americanus (American lobster) protein is Troponin C, isoform 2B.